The chain runs to 342 residues: Dihydroorotase (342 aa).

The Zn(2+) site is built by His13 and His15. Residues 15–17 and Asn41 each bind substrate; that span reads HLR. Residues Lys98, His135, and His173 each coordinate Zn(2+). Lys98 is subject to N6-carboxylysine. His135 contacts substrate. Leu218 provides a ligand contact to substrate. Asp246 is a binding site for Zn(2+). Asp246 is an active-site residue. Substrate-binding residues include His250 and Ala262.

It belongs to the metallo-dependent hydrolases superfamily. DHOase family. Class II DHOase subfamily. As to quaternary structure, homodimer. Zn(2+) is required as a cofactor.

It catalyses the reaction (S)-dihydroorotate + H2O = N-carbamoyl-L-aspartate + H(+). It participates in pyrimidine metabolism; UMP biosynthesis via de novo pathway; (S)-dihydroorotate from bicarbonate: step 3/3. Catalyzes the reversible cyclization of carbamoyl aspartate to dihydroorotate. The polypeptide is Dihydroorotase (Aliivibrio fischeri (strain MJ11) (Vibrio fischeri)).